A 1066-amino-acid polypeptide reads, in one-letter code: Cytoplasmic dynein 2 intermediate chain 1 (1066 aa).

Disordered regions lie at residues 22-366 (LWAI…ENAR) and 381-408 (YEDD…LEEL). Ser30 carries the phosphoserine modification. Composition is skewed to basic and acidic residues over residues 30–135 (SKEE…EELR), 147–171 (ETRD…RSEE), 180–256 (DEDR…EERH), 264–308 (GFHF…KRDG), and 316–336 (NLVR…HEEG). Ser247 bears the Phosphoserine mark. Acidic residues-rich tracts occupy residues 351–362 (ETVEIEKEETDL) and 381–397 (YEDD…ESSN). Positions 399–408 (PESREKLEEL) are enriched in basic and acidic residues. A binding to the DYNLT2B-DYNLT1/DYNLT3 dimer region spans residues 473–552 (ASHRQKSRTQ…DIQTEEIETR (80 aa)). WD repeat units lie at residues 694–734 (ICES…RLHY), 775–821 (VHKK…KADI), 907–947 (IRPV…PLLQ), and 952–992 (TDSH…LGPV).

It belongs to the dynein light intermediate chain family. As to quaternary structure, intermediate chain of the cytoplasmic dynein complex 2, a multisubunit complex, composed at least of eleven different proteins. The cytoplasmic dynein 2 complex consists of two catalytic heavy chains (HCs) and a number of non-catalytic subunits presented by intermediate chains (ICs), light intermediate chains (LICs) and light chains (LCs). Among them, a heavy chain (DYNC2H1), two intermediate chains (DYNC2I2 and DYNC2I1), a light intermediate chain (DYNC2LI1), and a light chain (DYNLT2B) are unique to the cytoplasmic dynein complex 2, but a subset of the light chains are also shared by dynein-1 and dynein-2 complexes. Interacts with DYNC2I2; their C-terminal domains each bind a copy of the heavy chain, and their extended N-terminal regions are held together by an array of light chain dimers. Interacts with DYNLT2B. Interacts (via the N-terminal half) with DYNLT2B-DYNLT1 dimer or with DYNLT2B-DYNLT3 dimer; this interaction is crucial for retrograde trafficking of ciliary proteins. Expressed in chondrocytes (at protein level).

The protein localises to the cell projection. It is found in the cilium. The protein resides in the cytoplasm. It localises to the cytoskeleton. Its subcellular location is the microtubule organizing center. The protein localises to the centrosome. Acts as one of several non-catalytic accessory components of the cytoplasmic dynein 2 complex (dynein-2 complex), a motor protein complex that drives the movement of cargos along microtubules within cilia and flagella in concert with the intraflagellar transport (IFT) system. DYNC2I1 plays a major role in retrograde ciliary protein trafficking in cilia and flagella. Also requires to maintain a functional transition zone. The chain is Cytoplasmic dynein 2 intermediate chain 1 from Homo sapiens (Human).